The primary structure comprises 274 residues: MTQQLQTLIDNAWDNRASLSPSAAPKEVVDAVEHVIAELNNGRLRVATREGVGQWTVHQWIKKAVLLSFRLKDNELMKAGDLGFFDKVPTKFAHLSADEMAATGVRVVPPAVARRGSFIAKGAILMPSYVNIGAYVDEGTMVDTWATVGSCAQVGKNVHLSGGVGLGGVLEPLQANPTIIEDNCFIGARSEVVEGVIVEENSVISMGVYIGQSTPIYDRTTGEITYGRVPAGSVVVSGNLPKDGGRYSMYAAIIVKKVDAKTRSTTSLNDLLRD.

2 residues coordinate substrate: Arg106 and Asp143.

The protein belongs to the transferase hexapeptide repeat family. As to quaternary structure, homotrimer.

The protein resides in the cytoplasm. The catalysed reaction is (S)-2,3,4,5-tetrahydrodipicolinate + succinyl-CoA + H2O = (S)-2-succinylamino-6-oxoheptanedioate + CoA. It participates in amino-acid biosynthesis; L-lysine biosynthesis via DAP pathway; LL-2,6-diaminopimelate from (S)-tetrahydrodipicolinate (succinylase route): step 1/3. This chain is 2,3,4,5-tetrahydropyridine-2,6-dicarboxylate N-succinyltransferase, found in Acidovorax sp. (strain JS42).